We begin with the raw amino-acid sequence, 413 residues long: Protein PHR1-LIKE 1 (413 aa).

Disordered regions lie at residues serine 171 to leucine 196 and glutamine 208 to arginine 233. 2 stretches are compositionally biased toward polar residues: residues aspartate 181–isoleucine 191 and glutamine 208–lysine 231. Positions alanine 228 to tyrosine 288 constitute an HTH myb-type domain. A DNA-binding region (H-T-H motif) is located at residues proline 259 to arginine 284. Residues threonine 322–glutamine 342 form a coiled coil region. The short motif at leucine 335–glutamate 340 is the LHEQLE element. A disordered region spans residues glutamine 363–aspartate 413. Composition is skewed to polar residues over residues asparagine 369–glycine 383 and threonine 396–alanine 405.

The protein belongs to the MYB-CC family. Homodimers and heterodimers. Interacts with MED25. Does not interact with PHL2 or PHL3. Expressed in shoots and roots.

The protein resides in the nucleus. In terms of biological role, transcription factor acting as central integrator of phosphate starvation responses. Regulates FER1 expression upon phosphate starvation, linking iron and phosphate homeostasis. The protein is Protein PHR1-LIKE 1 (PHL1) of Arabidopsis thaliana (Mouse-ear cress).